Reading from the N-terminus, the 339-residue chain is tRNA N6-adenosine threonylcarbamoyltransferase (339 aa).

Histidine 111 and histidine 115 together coordinate Fe cation. Residues leucine 139–glycine 143, aspartate 172, glycine 185, aspartate 189, and asparagine 280 contribute to the substrate site. Aspartate 308 lines the Fe cation pocket.

The protein belongs to the KAE1 / TsaD family. The cofactor is Fe(2+).

The protein localises to the cytoplasm. The catalysed reaction is L-threonylcarbamoyladenylate + adenosine(37) in tRNA = N(6)-L-threonylcarbamoyladenosine(37) in tRNA + AMP + H(+). Required for the formation of a threonylcarbamoyl group on adenosine at position 37 (t(6)A37) in tRNAs that read codons beginning with adenine. Is involved in the transfer of the threonylcarbamoyl moiety of threonylcarbamoyl-AMP (TC-AMP) to the N6 group of A37, together with TsaE and TsaB. TsaD likely plays a direct catalytic role in this reaction. This is tRNA N6-adenosine threonylcarbamoyltransferase from Bacteroides thetaiotaomicron (strain ATCC 29148 / DSM 2079 / JCM 5827 / CCUG 10774 / NCTC 10582 / VPI-5482 / E50).